A 377-amino-acid chain; its full sequence is Chaperone protein DnaJ (377 aa).

One can recognise a J domain in the interval Asp5–Gly70. The CR-type zinc-finger motif lies at Gly132–Tyr210. Residues Cys145, Cys148, Cys162, Cys165, Cys184, Cys187, Cys198, and Cys201 each coordinate Zn(2+). CXXCXGXG motif repeat units follow at residues Cys145–Gly152, Cys162–Gly169, Cys184–Gly191, and Cys198–Gly205.

Belongs to the DnaJ family. As to quaternary structure, homodimer. The cofactor is Zn(2+).

The protein resides in the cytoplasm. Participates actively in the response to hyperosmotic and heat shock by preventing the aggregation of stress-denatured proteins and by disaggregating proteins, also in an autonomous, DnaK-independent fashion. Unfolded proteins bind initially to DnaJ; upon interaction with the DnaJ-bound protein, DnaK hydrolyzes its bound ATP, resulting in the formation of a stable complex. GrpE releases ADP from DnaK; ATP binding to DnaK triggers the release of the substrate protein, thus completing the reaction cycle. Several rounds of ATP-dependent interactions between DnaJ, DnaK and GrpE are required for fully efficient folding. Also involved, together with DnaK and GrpE, in the DNA replication of plasmids through activation of initiation proteins. This chain is Chaperone protein DnaJ, found in Buchnera aphidicola subsp. Acyrthosiphon pisum (strain Tuc7).